A 438-amino-acid chain; its full sequence is Aflatoxin cluster transcriptional coactivator aflS (438 aa).

In terms of domain architecture, HTH iclR-type spans 65–134 (LALYNQLLAC…PSPGHVAHSV (70 aa)). Positions 95 to 114 (FEDVADIAGVPECRLRRLVR) form a DNA-binding region, H-T-H motif.

As to quaternary structure, interacts with aflR.

It localises to the nucleus. Transcription factor; part of the gene cluster that mediates the biosynthesis of aflatoxin, a polyketide-derived furanocoumarin which is part of the most toxic and carcinogenic compounds among the known mycotoxins. AflS exhibits no DNA-binding capability on its own, but forms a complex with the other aflatoxin cluster transcription factor aflR and acts as a modulator of aflR's DNA-binding by decreasing its DNA-binding affinity. The protein is Aflatoxin cluster transcriptional coactivator aflS of Aspergillus flavus (strain ATCC 200026 / FGSC A1120 / IAM 13836 / NRRL 3357 / JCM 12722 / SRRC 167).